Here is a 298-residue protein sequence, read N- to C-terminus: uncharacterized protein (298 aa).

The next 10 helical transmembrane spans lie at 5–25, 36–56, 76–96, 97–117, 124–144, 147–167, 181–201, 216–236, 244–264, and 272–292; these read ILFGVSMILLANLCFGIMSAF, MENVFYRSITMTLLLLLIYPF, VVVGGLAMLAFFYNIEKISLA, TATAFSQCAPIYTVLLSPLLL, STLISACIGIVGVVLISDPSV, VGPVEIFMGILSGIFVSLAYI, VILAFAFGMSLLGLVGMFIDI, ILWISLIGISGTLGQYFLTYA, IIAPIEYTRIVWGLLFGLYLG, and SSLGVALILCSGLLIALPALL. One can recognise an EamA 1 domain in the interval 17–141; sequence LCFGIMSAFV…GIVGVVLISD (125 aa). The EamA 2 domain maps to 183–288; sequence LAFAFGMSLL…ILCSGLLIAL (106 aa).

Belongs to the EamA transporter family.

The protein localises to the cell membrane. This is an uncharacterized protein from Helicobacter pylori (strain ATCC 700392 / 26695) (Campylobacter pylori).